The sequence spans 365 residues: Embryonic developmental protein tofu-6 (365 aa).

One can recognise an RRM domain in the interval 13–90 (AGFHIRNVPK…YSLKVSDHKN (78 aa)).

In terms of biological role, required maternally for early embryonic cell divisions. May have a role in DNA replication. The polypeptide is Embryonic developmental protein tofu-6 (Caenorhabditis briggsae).